The sequence spans 1996 residues: Protein Shroom3 (1996 aa).

One can recognise a PDZ domain in the interval 25–110 (YIYLEAFLEG…TLRLVVRRDV (86 aa)). The segment at 150–173 (KHRRSEPAGRPHSWHTTKSGEKQP) is disordered. Serine 213 carries the post-translational modification Phosphoserine. Disordered regions lie at residues 340–389 (NGQG…PARS), 437–468 (EKSP…TSIY), 568–629 (DASL…WEGD), 673–772 (RRHS…LQGF), and 788–1053 (FEQR…PESS). Phosphoserine is present on residues serine 439 and serine 443. The span at 700-718 (KAEDPGRKAAPDLGSHLDR) shows a compositional bias: basic and acidic residues. Residues 750 to 768 (HPHTSSLGRRGPGPGSASA) are compositionally biased toward low complexity. Over residues 814 to 823 (TVSTSSTSGN) the composition is skewed to polar residues. Serine 816 carries the phosphoserine modification. 2 stretches are compositionally biased toward basic and acidic residues: residues 826–836 (EETKAHIRFSE) and 846–859 (QHFK…EEAS). 2 stretches are compositionally biased toward polar residues: residues 862–871 (PCGQQLSGGA) and 887–896 (RSQSTFQLSS). At serine 890 the chain carries Phosphoserine. Over residues 897 to 909 (EPEREPEWRDRPG) the composition is skewed to basic and acidic residues. Phosphoserine is present on residues serine 910 and serine 913. Positions 928–1030 (IKDAQSRVLG…SEPEKMNEVG (103 aa)) constitute an ASD1 domain. A compositionally biased stretch (low complexity) spans 950 to 964 (APVASRSWRPRPSSA). Phosphoserine is present on serine 970. Basic and acidic residues predominate over residues 1011 to 1027 (LTPEQKKRSYSEPEKMN). Phosphoserine is present on residues serine 1069 and serine 1072. Disordered regions lie at residues 1093–1115 (KTGK…LRER), 1137–1223 (SSLS…MSAE), 1315–1573 (ECPG…SFNK), and 1627–1665 (SLGG…SSED). The segment covering 1137–1148 (SSLSSLREPSLQ) has biased composition (low complexity). The residue at position 1221 (serine 1221) is a Phosphoserine. The span at 1366 to 1375 (YCSQDGQTGR) shows a compositional bias: polar residues. The span at 1403 to 1417 (CEGDGPEHGVEEGTR) shows a compositional bias: basic and acidic residues. Phosphoserine is present on serine 1441. The span at 1459–1472 (KQQSLPSLCSTSDP) shows a compositional bias: polar residues. Positions 1498–1515 (PPPHEDYEDEVFVRDPHP) are enriched in basic and acidic residues. The segment covering 1524 to 1536 (EPLPPPPPPPPSQ) has biased composition (pro residues). Positions 1634–1649 (PIQTQSLSHDPVSGTQ) are enriched in polar residues. Residues 1651–1665 (LEKKVSPDPQKSSED) are compositionally biased toward basic and acidic residues. Residues 1669–1957 (EALAKEIVHQ…QVKCLLESLP (289 aa)) enclose the ASD2 domain.

It belongs to the shroom family. Interacts with F-actin. Interacts with ROCK1.

The protein resides in the cell junction. It localises to the adherens junction. It is found in the cytoplasm. Its subcellular location is the cytoskeleton. The protein localises to the apical cell membrane. Its function is as follows. Controls cell shape changes in the neuroepithelium during neural tube closure. Induces apical constriction in epithelial cells by promoting the apical accumulation of F-actin and myosin II, and probably by bundling stress fibers. Induces apicobasal cell elongation by redistributing gamma-tubulin and directing the assembly of robust apicobasal microtubule arrays. The sequence is that of Protein Shroom3 (SHROOM3) from Homo sapiens (Human).